The sequence spans 276 residues: Vitamin B12-binding protein (276 aa).

A signal peptide spans 1–20; it reads MLVIRLIACTFLFITPSLLA. Residues 27 to 274 form the Fe/B12 periplasmic-binding domain; the sequence is RIISLAPHAT…QVCTYLKIAQ (248 aa). Cyanocob(III)alamin is bound at residue Tyr54. Cysteines 187 and 267 form a disulfide.

Belongs to the BtuF family. As to quaternary structure, the complex is composed of two ATP-binding proteins (BtuD), two transmembrane proteins (BtuC) and a solute-binding protein (BtuF).

The protein localises to the periplasm. Part of the ABC transporter complex BtuCDF involved in vitamin B12 import. Binds vitamin B12 and delivers it to the periplasmic surface of BtuC. This chain is Vitamin B12-binding protein, found in Vibrio cholerae serotype O1 (strain ATCC 39541 / Classical Ogawa 395 / O395).